Reading from the N-terminus, the 1413-residue chain is Sushi, nidogen and EGF-like domain-containing protein 1 (1413 aa).

A signal peptide spans 1-24 (MRHGVAWALLVAAALGLGARGVRG). One can recognise an NIDO domain in the interval 103-258 (AFWADVDNRR…GRWAFRIDDA (156 aa)). 2 N-linked (GlcNAc...) asparagine glycosylation sites follow: Asn-145 and Asn-204. 3 consecutive EGF-like domains span residues 268–309 (TTSV…RRCH), 311–347 (DVNE…PTCE), and 349–385 (AQSP…AACE). Disulfide bonds link Cys-272–Cys-284, Cys-278–Cys-297, Cys-299–Cys-308, Cys-315–Cys-326, Cys-320–Cys-335, Cys-337–Cys-346, Cys-353–Cys-364, Cys-358–Cys-373, Cys-375–Cys-384, Cys-391–Cys-402, Cys-396–Cys-411, Cys-413–Cys-422, Cys-433–Cys-444, Cys-438–Cys-453, Cys-455–Cys-464, Cys-472–Cys-480, Cys-474–Cys-488, and Cys-490–Cys-499. Residue Asn-292 is glycosylated (N-linked (GlcNAc...) asparagine). Residues 352–374 (PCDTKECQHGGQCQVENGSAVCV) form the Follistatin-like 1 domain. N-linked (GlcNAc...) asparagine glycosylation occurs at Asn-368. Residues 387–423 (DVDDCSPDPCLNGGSCVDLVGNYTCLCAEPFKGLRCE) enclose the EGF-like 4; calcium-binding domain. Asn-408 carries N-linked (GlcNAc...) asparagine glycosylation. EGF-like domains lie at 429-465 (VPDA…LDCR) and 468-500 (VPDD…LLCE). The N-linked (GlcNAc...) asparagine glycan is linked to Asn-484. Residues 507 to 530 (PCNMNTQCPDGGYCMEHGGSYLCV) form the Follistatin-like 2 domain. Asn-536 is a glycosylation site (N-linked (GlcNAc...) asparagine). EGF-like domains are found at residues 541-577 (LPSP…KHCE), 580-616 (RPHL…RHCE), 619-655 (KPDS…RHCE), and 657-693 (APSP…RRCQ). 26 cysteine pairs are disulfide-bonded: Cys-545–Cys-556, Cys-550–Cys-565, Cys-567–Cys-576, Cys-584–Cys-595, Cys-589–Cys-604, Cys-606–Cys-615, Cys-623–Cys-634, Cys-628–Cys-643, Cys-645–Cys-654, Cys-661–Cys-672, Cys-666–Cys-681, Cys-683–Cys-692, Cys-698–Cys-739, Cys-724–Cys-751, Cys-757–Cys-768, Cys-762–Cys-777, Cys-779–Cys-788, Cys-795–Cys-806, Cys-800–Cys-815, Cys-817–Cys-826, Cys-833–Cys-844, Cys-838–Cys-853, Cys-855–Cys-864, Cys-871–Cys-882, Cys-876–Cys-891, and Cys-893–Cys-902. One can recognise a Sushi domain in the interval 696–753 (VDCGPPEEVKHATLRFNGTRLGAVALYACDRGYSLSAPSRIRVCQPHGVWSEPPQCLE). A glycan (N-linked (GlcNAc...) asparagine) is linked at Asn-712. The region spanning 753–789 (EIDECRSQPCLHGGSCQDRVAGYLCLCSTGYEGAHCE) is the EGF-like 11; calcium-binding domain. One can recognise an EGF-like 12; calcium-binding domain in the interval 791–827 (ERDECRAHPCRNGGSCRNLPGAYVCRCPAGFVGVHCE). 2 EGF-like domains span residues 829 to 865 (EVDA…YHCE) and 867 to 903 (VSDP…EDCA). Asn-886 carries an N-linked (GlcNAc...) asparagine glycan. 3 Fibronectin type-III domains span residues 908 to 1006 (PPTA…TRPR), 1007 to 1105 (PVEG…TRPL), and 1106 to 1200 (PPAN…SPRD). N-linked (GlcNAc...) asparagine glycosylation is found at Asn-977, Asn-1015, Asn-1109, and Asn-1139. A disordered region spans residues 1206–1226 (WHQGGHHPRVLKNRPPPARLP). Residues 1207 to 1217 (HQGGHHPRVLK) are compositionally biased toward basic residues. Positions 1307–1343 (VPGNCSENPCQNGGTCVPGADAHSCDCGPGFKGRRCE) constitute an EGF-like 15 domain. Residue Asn-1310 is glycosylated (N-linked (GlcNAc...) asparagine). Disulfide bonds link Cys-1311/Cys-1322, Cys-1316/Cys-1331, and Cys-1333/Cys-1342. The interval 1394–1413 (TSLKKTPNRKQSKSQTLEKS) is disordered.

Phosphorylated on serine and threonine residues. Post-translationally, N-glycosylated.

Its subcellular location is the secreted. It is found in the extracellular space. The protein localises to the extracellular matrix. The protein is Sushi, nidogen and EGF-like domain-containing protein 1 of Homo sapiens (Human).